Here is a 353-residue protein sequence, read N- to C-terminus: Probable protein phosphatase 2C 48 (353 aa).

Positions 54–348 (FAAVCSRRGE…DDCSAICLFF (295 aa)) constitute a PPM-type phosphatase domain. Residues aspartate 90, glycine 91, aspartate 293, and aspartate 339 each contribute to the Mn(2+) site.

Belongs to the PP2C family. Mg(2+) serves as cofactor. It depends on Mn(2+) as a cofactor.

It carries out the reaction O-phospho-L-seryl-[protein] + H2O = L-seryl-[protein] + phosphate. The enzyme catalyses O-phospho-L-threonyl-[protein] + H2O = L-threonyl-[protein] + phosphate. The protein is Probable protein phosphatase 2C 48 of Oryza sativa subsp. japonica (Rice).